The chain runs to 308 residues: Baculoviral IAP repeat-containing protein bir-2 (308 aa).

BIR repeat units lie at residues 27 to 98 (RFAS…EFVM) and 170 to 241 (RLAT…DFIK). Zn(2+) contacts are provided by Cys-68, Cys-71, His-87, Cys-94, Cys-211, Cys-214, His-230, and Cys-237.

Belongs to the IAP family.

The sequence is that of Baculoviral IAP repeat-containing protein bir-2 from Caenorhabditis elegans.